The chain runs to 318 residues: Retinol dehydrogenase 11 (318 aa).

Residues 1 to 21 (MVELMFPLLLLLLPFLLYMAA) traverse the membrane as a helical; Signal-anchor for type II membrane protein segment. Topologically, residues 22-318 (PQIRKMLSSG…SCDLLGLPID (297 aa)) are cytoplasmic. An NADP(+)-binding site is contributed by 48-54 (GANTGIG). Lys-112 carries the post-translational modification N6-acetyllysine. Residue Ser-177 coordinates substrate. Tyr-202 serves as the catalytic Proton acceptor.

The protein belongs to the short-chain dehydrogenases/reductases (SDR) family. Interacts with SELENOF. Not glycosylated. Predominantly expressed in the epithelial cells of prostate, in both basal and luminal secretory cell populations. Expressed at low levels in spleen, thymus, testis, ovary, small intestine, colon, peripherical blood leukocytes, kidney, adrenal gland and fetal liver. Not detected in prostatic fibromuscular stromal cells, endothelial cells, or infiltrating lymphocytes.

The protein resides in the endoplasmic reticulum membrane. It carries out the reaction all-trans-retinol + NADP(+) = all-trans-retinal + NADPH + H(+). The enzyme catalyses 11-cis-retinol + NADP(+) = 11-cis-retinal + NADPH + H(+). The catalysed reaction is 9-cis-retinol + NADP(+) = 9-cis-retinal + NADPH + H(+). It catalyses the reaction 13-cis-retinol + NADP(+) = 13-cis-retinal + NADPH + H(+). Its pathway is cofactor metabolism; retinol metabolism. With respect to regulation, SELENOF decreases the retinol dehydrogenase activity. Functionally, retinol dehydrogenase with a clear preference for NADP. Displays high activity towards 9-cis, 11-cis and all-trans-retinol, and to a lesser extent on 13-cis-retinol. Exhibits a low reductive activity towards unsaturated medium-chain aldehydes such as cis -6-nonenal and no activity toward nonanal or 4-hydroxy-nonenal. Has no dehydrogenase activity towards steroid. The protein is Retinol dehydrogenase 11 (RDH11) of Homo sapiens (Human).